Reading from the N-terminus, the 288-residue chain is Pyridoxal kinase PdxY (288 aa).

Substrate contacts are provided by residues S12 and 47 to 48; that span reads TQ. Residues D114, E151, K184, and 211–214 contribute to the ATP site; that span reads RPLL. D225 lines the substrate pocket.

Belongs to the pyridoxine kinase family. PdxY subfamily. Homodimer. Requires Mg(2+) as cofactor.

It carries out the reaction pyridoxal + ATP = pyridoxal 5'-phosphate + ADP + H(+). It functions in the pathway cofactor metabolism; pyridoxal 5'-phosphate salvage; pyridoxal 5'-phosphate from pyridoxal: step 1/1. In terms of biological role, pyridoxal kinase involved in the salvage pathway of pyridoxal 5'-phosphate (PLP). Catalyzes the phosphorylation of pyridoxal to PLP. This chain is Pyridoxal kinase PdxY, found in Pseudomonas syringae pv. syringae (strain B728a).